The sequence spans 300 residues: uncharacterized protein (300 aa).

The active-site Proton donor is the Tyr53. NADP(+) is bound at residue 210-220 (SPLAGGKVFTE).

Belongs to the aldo/keto reductase family. Aldo/keto reductase 2 subfamily.

This is an uncharacterized protein from Bacillus subtilis (strain 168).